Here is a 732-residue protein sequence, read N- to C-terminus: Bromodomain-containing factor 1 (732 aa).

Residues 1–22 (MSETFPETNTPVQTPSTESFVN) show a composition bias toward polar residues. Disordered stretches follow at residues 1 to 207 (MSET…NLPE), 324 to 380 (TNVA…ETKP), 491 to 517 (NKPV…EDNV), 556 to 600 (REQQ…TPPQ), and 700 to 732 (VNGQ…SEEE). Residues 37–51 (SQDSDSNQQSSHQEP) are compositionally biased toward low complexity. Positions 89–100 (ASQTGVIQTEVS) are enriched in polar residues. Acidic residues predominate over residues 137-147 (EAPEENPQEEV). The 110-residue stretch at 206–315 (PENPIPQHQA…AQFEKLMVKV (110 aa)) folds into the Bromo 1 domain. Polar residues predominate over residues 327–338 (AEATSVATSPTT). A compositionally biased stretch (basic and acidic residues) spans 370 to 380 (KSKELPYETKP). Positions 383–492 (KKVAAELRFC…AVFDKKWANK (110 aa)) constitute a Bromo 2 domain. Residues 529–569 (AIQVMENQIIRMRKELDELKKEHLKKLREQQAARKKKKQQK) adopt a coiled-coil conformation. The span at 561 to 579 (ARKKKKQQKGKRRAPKAKH) shows a compositional bias: basic residues. Residues 590 to 600 (PPEPPKLTPPQ) show a composition bias toward pro residues. The NET domain occupies 593–672 (PPKLTPPQPV…GDKALKNSAG (80 aa)). Acidic residues predominate over residues 718–732 (ESSEDEASSESSEEE).

The protein belongs to the BET family.

The protein resides in the nucleus. In terms of biological role, transcription factor involved in the expression of a broad class of genes including snRNAs. Required for sporulation and DNA-damage repair. Prevents the spreading of SIR silencing at telomeres and protects histone H4, but not H3, from deacetylation. The sequence is that of Bromodomain-containing factor 1 (BDF1) from Candida albicans (strain SC5314 / ATCC MYA-2876) (Yeast).